A 274-amino-acid polypeptide reads, in one-letter code: NH(3)-dependent NAD(+) synthetase (274 aa).

27-34 (GLSGGIDS) contributes to the ATP binding site. Position 33 (D33) interacts with Mg(2+). R121 is a binding site for deamido-NAD(+). T141 contributes to the ATP binding site. E146 contributes to the Mg(2+) binding site. Residues K170 and S192 each contribute to the ATP site.

This sequence belongs to the NAD synthetase family. As to quaternary structure, homodimer.

It catalyses the reaction deamido-NAD(+) + NH4(+) + ATP = AMP + diphosphate + NAD(+) + H(+). It participates in cofactor biosynthesis; NAD(+) biosynthesis; NAD(+) from deamido-NAD(+) (ammonia route): step 1/1. Functionally, catalyzes the ATP-dependent amidation of deamido-NAD to form NAD. Uses ammonia as a nitrogen source. This is NH(3)-dependent NAD(+) synthetase from Helicobacter hepaticus (strain ATCC 51449 / 3B1).